We begin with the raw amino-acid sequence, 700 residues long: Elongation factor G (700 aa).

A tr-type G domain is found at 8-290 (ERYRNIGISA…AVIDYLPAPT (283 aa)). Residues 17–24 (AHIDAGKT), 88–92 (DTPGH), and 142–145 (NKMD) contribute to the GTP site.

Belongs to the TRAFAC class translation factor GTPase superfamily. Classic translation factor GTPase family. EF-G/EF-2 subfamily.

It is found in the cytoplasm. Functionally, catalyzes the GTP-dependent ribosomal translocation step during translation elongation. During this step, the ribosome changes from the pre-translocational (PRE) to the post-translocational (POST) state as the newly formed A-site-bound peptidyl-tRNA and P-site-bound deacylated tRNA move to the P and E sites, respectively. Catalyzes the coordinated movement of the two tRNA molecules, the mRNA and conformational changes in the ribosome. In Glaesserella parasuis serovar 5 (strain SH0165) (Haemophilus parasuis), this protein is Elongation factor G.